The sequence spans 493 residues: Probable protein phosphatase 2C 40 (493 aa).

The PPM-type phosphatase domain maps to 145–480 (LLSAMEVQVA…DDVTIMVITL (336 aa)). D180, G181, D408, and D471 together coordinate Mn(2+).

This sequence belongs to the PP2C family. Requires Mg(2+) as cofactor. It depends on Mn(2+) as a cofactor.

The enzyme catalyses O-phospho-L-seryl-[protein] + H2O = L-seryl-[protein] + phosphate. The catalysed reaction is O-phospho-L-threonyl-[protein] + H2O = L-threonyl-[protein] + phosphate. The polypeptide is Probable protein phosphatase 2C 40 (Arabidopsis thaliana (Mouse-ear cress)).